The chain runs to 154 residues: Cyanate hydratase (154 aa).

Active-site residues include R100, E103, and S126.

It belongs to the cyanase family.

It carries out the reaction cyanate + hydrogencarbonate + 3 H(+) = NH4(+) + 2 CO2. Functionally, catalyzes the reaction of cyanate with bicarbonate to produce ammonia and carbon dioxide. In Aspergillus terreus (strain NIH 2624 / FGSC A1156), this protein is Cyanate hydratase.